Consider the following 504-residue polypeptide: Acetylcholine receptor subunit epsilon (504 aa).

The first 19 residues, 1 to 19, serve as a signal peptide directing secretion; it reads MESGVRILSLLILLHNSLA. At 20–240 the chain is on the extracellular side; sequence SESEESRLIK…IVFNLIIQRK (221 aa). 2 N-linked (GlcNAc...) asparagine glycosylation sites follow: Asn-88 and Asn-161. An intrachain disulfide couples Cys-148 to Cys-162. A helical transmembrane segment spans residues 241-265; that stretch reads PLFYIINIIVPCVLISFLVVLVYFL. Residues 266-273 lie on the Cytoplasmic side of the membrane; sequence PAKAGGQK. The chain crosses the membrane as a helical span at residues 274-292; it reads CTVSISVLLAQTVFLFLIA. Residues 293 to 307 are Extracellular-facing; it reads QMVPETSLSVPLIGK. The chain crosses the membrane as a helical span at residues 308–329; it reads YLMFVMFVSTLIVLSCVIVLNV. Topologically, residues 330-473 are cytoplasmic; that stretch reads SLRSPSTHNL…WILIGKVLDV (144 aa). A helical membrane pass occupies residues 474–497; it reads LCFWVALPLFVLGTLAIFLMGHFN. At 498 to 504 the chain is on the extracellular side; it reads TAPEHPF.

This sequence belongs to the ligand-gated ion channel (TC 1.A.9) family. Acetylcholine receptor (TC 1.A.9.1) subfamily. Epsilon/CHRNE sub-subfamily. As to quaternary structure, pentamer of two alpha chains, and one each of the beta, delta, and gamma (in immature muscle) or epsilon (in mature muscle) chains.

Its subcellular location is the postsynaptic cell membrane. It localises to the cell membrane. The catalysed reaction is K(+)(in) = K(+)(out). It carries out the reaction Na(+)(in) = Na(+)(out). After binding acetylcholine, the AChR responds by an extensive change in conformation that affects all subunits and leads to opening of an ion-conducting channel across the plasma membrane. The chain is Acetylcholine receptor subunit epsilon (chrne) from Xenopus laevis (African clawed frog).